Here is a 273-residue protein sequence, read N- to C-terminus: Ribosomal RNA small subunit methyltransferase A (273 aa).

Positions 18, 20, 45, 66, 91, and 113 each coordinate S-adenosyl-L-methionine.

This sequence belongs to the class I-like SAM-binding methyltransferase superfamily. rRNA adenine N(6)-methyltransferase family. RsmA subfamily.

Its subcellular location is the cytoplasm. It carries out the reaction adenosine(1518)/adenosine(1519) in 16S rRNA + 4 S-adenosyl-L-methionine = N(6)-dimethyladenosine(1518)/N(6)-dimethyladenosine(1519) in 16S rRNA + 4 S-adenosyl-L-homocysteine + 4 H(+). Functionally, specifically dimethylates two adjacent adenosines (A1518 and A1519) in the loop of a conserved hairpin near the 3'-end of 16S rRNA in the 30S particle. May play a critical role in biogenesis of 30S subunits. The chain is Ribosomal RNA small subunit methyltransferase A from Escherichia coli (strain SE11).